A 527-amino-acid chain; its full sequence is Succinate-semialdehyde dehydrogenase, mitochondrial (527 aa).

Residues 1–35 (MAMAMAMRRAAALGARHILAASSTSSSGVLLRRHM) constitute a mitochondrion transit peptide. NAD(+) is bound by residues Arg208, 223–226 (KPSE), and 276–281 (GSTAVG). Arg208 is a substrate binding site. Glu298 functions as the Proton acceptor in the catalytic mechanism. Substrate-binding residues include Arg326, Cys332, and Ser489. Residue Cys332 is the Nucleophile of the active site. A disulfide bridge connects residues Cys332 and Cys334.

This sequence belongs to the aldehyde dehydrogenase family. In terms of assembly, homotetramer.

It localises to the mitochondrion matrix. The catalysed reaction is succinate semialdehyde + NAD(+) + H2O = succinate + NADH + 2 H(+). The protein operates within amino-acid degradation; 4-aminobutanoate degradation. Redox-regulated. Inhibited under oxydizing conditions. Its function is as follows. Oxidizes specifically succinate semialdehyde. Involved in plant response to environmental stress by preventing the accumulation of reactive oxygen species. This Oryza sativa subsp. japonica (Rice) protein is Succinate-semialdehyde dehydrogenase, mitochondrial (ALDH5F1).